Here is a 500-residue protein sequence, read N- to C-terminus: NAD(P)H-quinone oxidoreductase chain 4, chloroplastic (500 aa).

The next 14 helical transmembrane spans lie at 4–24, 35–55, 84–104, 113–133, 134–154, 167–187, 211–231, 242–262, 272–292, 305–325, 330–350, 386–406, 416–436, and 463–483; these read FPWL…IFVF, YTIF…SYYF, GLSL…TLAA, LFHF…SSQN, LLLF…LLAM, FILY…GIAF, ILFY…IPLH, HYST…YGLV, AHSI…IYAA, IAYS…SISD, GAIL…FLSG, LALP…GIIT, ILIT…LLSM, and FVSI…DFVF.

The protein belongs to the complex I subunit 4 family.

The protein resides in the plastid. Its subcellular location is the chloroplast thylakoid membrane. It catalyses the reaction a plastoquinone + NADH + (n+1) H(+)(in) = a plastoquinol + NAD(+) + n H(+)(out). It carries out the reaction a plastoquinone + NADPH + (n+1) H(+)(in) = a plastoquinol + NADP(+) + n H(+)(out). This Populus trichocarpa (Western balsam poplar) protein is NAD(P)H-quinone oxidoreductase chain 4, chloroplastic.